A 371-amino-acid polypeptide reads, in one-letter code: Cytochrome b (371 aa).

A run of 4 helical transmembrane segments spans residues 25 to 45, 69 to 90, 105 to 125, and 170 to 190; these read FGSM…FLAV, WMMQ…YIHI, WLSG…GYVL, and FSAL…LHIM. The heme b site is built by His-75 and His-89. Positions 174 and 188 each coordinate heme b. An a ubiquinone-binding site is contributed by His-193. A run of 4 helical transmembrane segments spans residues 218 to 238, 280 to 300, 312 to 332, and 339 to 358; these read YKDL…VSFL, LGGA…PFTH, IMQL…WSAT, and FTVI…IMNP.

It belongs to the cytochrome b family. In terms of assembly, the cytochrome bc1 complex contains 3 respiratory subunits (MT-CYB, CYC1 and UQCRFS1), 2 core proteins (UQCRC1 and UQCRC2) and probably 6 low-molecular weight proteins. Heme b serves as cofactor.

It is found in the mitochondrion inner membrane. In terms of biological role, component of the ubiquinol-cytochrome c reductase complex (complex III or cytochrome b-c1 complex) that is part of the mitochondrial respiratory chain. The b-c1 complex mediates electron transfer from ubiquinol to cytochrome c. Contributes to the generation of a proton gradient across the mitochondrial membrane that is then used for ATP synthesis. The protein is Cytochrome b (MT-CYB) of Eryx elegans (Central Asian sand boa).